The primary structure comprises 393 residues: Dual-specificity RNA methyltransferase RlmN (393 aa).

The disordered stretch occupies residues 1–22 (MSEQLLSELSPVAATSPSPAPA). Residues 10–22 (SPVAATSPSPAPA) show a composition bias toward low complexity. Catalysis depends on glutamate 114, which acts as the Proton acceptor. The Radical SAM core domain maps to 120–358 (EDDRATLCVS…TTIVRKTRGD (239 aa)). Cysteine 127 and cysteine 364 are oxidised to a cystine. [4Fe-4S] cluster is bound by residues cysteine 134, cysteine 138, and cysteine 141. Residues 188 to 189 (GE), serine 220, 242 to 244 (SLH), and asparagine 321 contribute to the S-adenosyl-L-methionine site. Cysteine 364 functions as the S-methylcysteine intermediate in the catalytic mechanism.

It belongs to the radical SAM superfamily. RlmN family. Requires [4Fe-4S] cluster as cofactor.

The protein localises to the cytoplasm. It catalyses the reaction adenosine(2503) in 23S rRNA + 2 reduced [2Fe-2S]-[ferredoxin] + 2 S-adenosyl-L-methionine = 2-methyladenosine(2503) in 23S rRNA + 5'-deoxyadenosine + L-methionine + 2 oxidized [2Fe-2S]-[ferredoxin] + S-adenosyl-L-homocysteine. The catalysed reaction is adenosine(37) in tRNA + 2 reduced [2Fe-2S]-[ferredoxin] + 2 S-adenosyl-L-methionine = 2-methyladenosine(37) in tRNA + 5'-deoxyadenosine + L-methionine + 2 oxidized [2Fe-2S]-[ferredoxin] + S-adenosyl-L-homocysteine. Specifically methylates position 2 of adenine 2503 in 23S rRNA and position 2 of adenine 37 in tRNAs. m2A2503 modification seems to play a crucial role in the proofreading step occurring at the peptidyl transferase center and thus would serve to optimize ribosomal fidelity. This is Dual-specificity RNA methyltransferase RlmN from Sodalis glossinidius (strain morsitans).